Reading from the N-terminus, the 276-residue chain is Large ribosomal subunit protein uL2 (276 aa).

2 disordered regions span residues 30-57 (EKSL…QGGG) and 219-276 (TVRG…RSKK).

It belongs to the universal ribosomal protein uL2 family. As to quaternary structure, part of the 50S ribosomal subunit. Forms a bridge to the 30S subunit in the 70S ribosome.

In terms of biological role, one of the primary rRNA binding proteins. Required for association of the 30S and 50S subunits to form the 70S ribosome, for tRNA binding and peptide bond formation. It has been suggested to have peptidyltransferase activity; this is somewhat controversial. Makes several contacts with the 16S rRNA in the 70S ribosome. The sequence is that of Large ribosomal subunit protein uL2 from Exiguobacterium sibiricum (strain DSM 17290 / CCUG 55495 / CIP 109462 / JCM 13490 / 255-15).